A 337-amino-acid chain; its full sequence is Putative 2-aminoethylphosphonate-binding periplasmic protein (337 aa).

Positions 1-21 (MKLSRLALLSVFALASAPSWA) are cleaved as a signal peptide.

The protein belongs to the bacterial solute-binding protein 1 family.

The protein localises to the periplasm. Probably part of the PhnSTUV complex (TC 3.A.1.11.5) involved in 2-aminoethylphosphonate import. This Salmonella typhi protein is Putative 2-aminoethylphosphonate-binding periplasmic protein (phnS).